Consider the following 173-residue polypeptide: Ribonuclease H (173 aa).

A disordered region spans residues 1 to 20; it reads MKATSKAKTHPPGATAAKDP. One can recognise an RNase H type-1 domain in the interval 20-162; the sequence is PQKQVIIYTD…CDVLSKEAAG (143 aa). Mg(2+)-binding residues include D29, E67, D89, and D154.

It belongs to the RNase H family. In terms of assembly, monomer. Requires Mg(2+) as cofactor.

The protein resides in the cytoplasm. The catalysed reaction is Endonucleolytic cleavage to 5'-phosphomonoester.. Endonuclease that specifically degrades the RNA of RNA-DNA hybrids. In Syntrophus aciditrophicus (strain SB), this protein is Ribonuclease H.